Here is a 118-residue protein sequence, read N- to C-terminus: Flowering-promoting factor 1-like protein 4 (118 aa).

Belongs to the FPF1 family.

This chain is Flowering-promoting factor 1-like protein 4, found in Oryza sativa subsp. japonica (Rice).